The sequence spans 174 residues: Small ribosomal subunit protein uS5 (174 aa).

In terms of domain architecture, S5 DRBM spans 16–79 (FSELIVSVRR…NAARKNMIRV (64 aa)).

This sequence belongs to the universal ribosomal protein uS5 family. As to quaternary structure, part of the 30S ribosomal subunit. Contacts proteins S4 and S8.

With S4 and S12 plays an important role in translational accuracy. Functionally, located at the back of the 30S subunit body where it stabilizes the conformation of the head with respect to the body. The protein is Small ribosomal subunit protein uS5 of Ehrlichia ruminantium (strain Gardel).